A 61-amino-acid polypeptide reads, in one-letter code: Large ribosomal subunit protein uL30 (61 aa).

Belongs to the universal ribosomal protein uL30 family. In terms of assembly, part of the 50S ribosomal subunit.

The protein is Large ribosomal subunit protein uL30 of Corynebacterium jeikeium (strain K411).